Reading from the N-terminus, the 156-residue chain is SCP2 sterol-binding domain-containing protein 1 (156 aa).

Residues 44–156 (NFSVFEDISQ…ERIFREWAKI (113 aa)) form the SCP2 domain.

The polypeptide is SCP2 sterol-binding domain-containing protein 1 (Scp2d1) (Mus musculus (Mouse)).